We begin with the raw amino-acid sequence, 421 residues long: Testin (421 aa).

Residues 92-199 (MILTNPVAAK…GDVKLPREMD (108 aa)) enclose the PET domain. Residues 133-164 (EKQPVAGSEGAQYRKKQLAKQLPAHDQDPSKC) form a disordered region. The span at 155–164 (PAHDQDPSKC) shows a compositional bias: basic and acidic residues. LIM zinc-binding domains follow at residues 234–297 (YSCY…CDSE), 299–359 (PRCA…NHAV), and 362–421 (QGCH…KMMS).

This sequence belongs to the prickle / espinas / testin family. Interacts via LIM domain 1 with ZYX. Interacts (via LIM domain 3) with ENAH and VASP. Interacts with ALKBH4, talin, actin, alpha-actinin, GRIP1 and PXN. Interacts (via LIM domain 2) with ACTL7A (via N-terminus). Heterodimer with ACTL7A; the heterodimer interacts with ENAH to form a heterotrimer.

The protein localises to the cytoplasm. The protein resides in the cell junction. Its subcellular location is the focal adhesion. In terms of biological role, scaffold protein that may play a role in cell adhesion, cell spreading and in the reorganization of the actin cytoskeleton. Plays a role in the regulation of cell proliferation. May act as a tumor suppressor. The polypeptide is Testin (TES) (Canis lupus familiaris (Dog)).